The following is a 233-amino-acid chain: Leucyl/phenylalanyl-tRNA--protein transferase (233 aa).

Belongs to the L/F-transferase family.

The protein resides in the cytoplasm. It catalyses the reaction N-terminal L-lysyl-[protein] + L-leucyl-tRNA(Leu) = N-terminal L-leucyl-L-lysyl-[protein] + tRNA(Leu) + H(+). The catalysed reaction is N-terminal L-arginyl-[protein] + L-leucyl-tRNA(Leu) = N-terminal L-leucyl-L-arginyl-[protein] + tRNA(Leu) + H(+). It carries out the reaction L-phenylalanyl-tRNA(Phe) + an N-terminal L-alpha-aminoacyl-[protein] = an N-terminal L-phenylalanyl-L-alpha-aminoacyl-[protein] + tRNA(Phe). Functionally, functions in the N-end rule pathway of protein degradation where it conjugates Leu, Phe and, less efficiently, Met from aminoacyl-tRNAs to the N-termini of proteins containing an N-terminal arginine or lysine. This is Leucyl/phenylalanyl-tRNA--protein transferase from Klebsiella pneumoniae subsp. pneumoniae (strain ATCC 700721 / MGH 78578).